Reading from the N-terminus, the 416-residue chain is Alpha-1-antiproteinase (416 aa).

The first 24 residues, 1–24 (MALSITRGLLLLAALCCLAPTSLA), serve as a signal peptide directing secretion. N-linked (GlcNAc...) asparagine glycans are attached at residues asparagine 68, asparagine 105, asparagine 143, and asparagine 269. Positions 371-390 (GATFLEAIPMSLPPDVEFNR) are RCL. Serine 381 bears the Phosphoserine mark.

Belongs to the serpin family. In terms of assembly, interacts with CELA2A. Interacts with ERGIC3 and LMAN1/ERGIC53. Interacts with PRSS1/Trypsin. Plasma.

It is found in the secreted. Its function is as follows. Inhibits human leukocyte elastase, pig pancreatic elastase and bovine trypsin on a 1:1 molar basis. The chain is Alpha-1-antiproteinase from Ovis aries (Sheep).